We begin with the raw amino-acid sequence, 224 residues long: ATP-dependent Clp protease proteolytic subunit 1 (224 aa).

Serine 120 serves as the catalytic Nucleophile. Residue histidine 145 is part of the active site.

It belongs to the peptidase S14 family. Fourteen ClpP subunits assemble into 2 heptameric rings which stack back to back to give a disk-like structure with a central cavity, resembling the structure of eukaryotic proteasomes.

The protein localises to the cytoplasm. The enzyme catalyses Hydrolysis of proteins to small peptides in the presence of ATP and magnesium. alpha-casein is the usual test substrate. In the absence of ATP, only oligopeptides shorter than five residues are hydrolyzed (such as succinyl-Leu-Tyr-|-NHMec, and Leu-Tyr-Leu-|-Tyr-Trp, in which cleavage of the -Tyr-|-Leu- and -Tyr-|-Trp bonds also occurs).. In terms of biological role, cleaves peptides in various proteins in a process that requires ATP hydrolysis. Has a chymotrypsin-like activity. Plays a major role in the degradation of misfolded proteins. The protein is ATP-dependent Clp protease proteolytic subunit 1 of Prochlorococcus marinus (strain MIT 9313).